The sequence spans 407 residues: Argininosuccinate synthase (407 aa).

ATP-binding positions include 12–20 (AFSGGLDTS) and Ala39. 2 residues coordinate L-citrulline: Tyr90 and Ser95. Residue Gly120 coordinates ATP. L-aspartate contacts are provided by Thr122, Asn126, and Asp127. An L-citrulline-binding site is contributed by Asn126. L-citrulline is bound by residues Arg130, Ser181, Ser190, Glu266, and Tyr278.

Belongs to the argininosuccinate synthase family. Type 1 subfamily. Homotetramer.

Its subcellular location is the cytoplasm. It carries out the reaction L-citrulline + L-aspartate + ATP = 2-(N(omega)-L-arginino)succinate + AMP + diphosphate + H(+). It functions in the pathway amino-acid biosynthesis; L-arginine biosynthesis; L-arginine from L-ornithine and carbamoyl phosphate: step 2/3. This is Argininosuccinate synthase from Nitrosospira multiformis (strain ATCC 25196 / NCIMB 11849 / C 71).